The following is a 541-amino-acid chain: MAKTIAYDEEARRGLERGLNSLADAVKVTLGPKGRNVVLEKKWGAPTITNDGVSIAKEIELEDPYEKIGAELVKEVAKKTDDVAGDGTTTATVLAQALVREGLRNVAAGANPLGLKRGIEKAVEAVTQGLLKSAKEVETKEQIAATAAISAGDVQIGELIAEAMDKVGNEGVITVEESNTFGLQLELTEGMRFDKGYISGYFVTDAERQEAVLEDPYILLVSSKVSTVKDLLPLLEKVIQAGKPLLIIAEDVEGEALSTLVVNKIRGTFKSVAVKAPGFGDRRKAMLQDMAILTGGQVVSEEVGLSLETADVALLGTARKVVVTKDETTIVEGAGDSDAIAGRVAQIRAEIENSDSDYDREKLQERLAKLAGGVAVIKAGAATEVELKERKHRIEDAVRNAKAAVEEGIVAGGGVALLQSAPVLEDLGLSGDEATGANIVRVALSAPLKQIAFNGGLEPGVVAEKVSNLPAGHGLNAATGEYEDLLKAGVADPVKVTRSALQNAASIAALFLTTEAVVADKPEKAAAPAGDPTGGMGGMDF.

ATP-binding positions include 29–32 (TLGP), 86–90 (DGTTT), Gly413, 476–478 (NAA), and Asp492.

It belongs to the chaperonin (HSP60) family. In terms of assembly, forms a cylinder of 14 subunits composed of two heptameric rings stacked back-to-back. Interacts with the co-chaperonin GroES.

It is found in the secreted. The protein resides in the capsule. It localises to the cell surface. Its subcellular location is the cell wall. The enzyme catalyses ATP + H2O + a folded polypeptide = ADP + phosphate + an unfolded polypeptide.. Together with its co-chaperonin GroES, plays an essential role in assisting protein folding. The GroEL-GroES system forms a nano-cage that allows encapsulation of the non-native substrate proteins and provides a physical environment optimized to promote and accelerate protein folding. This chain is Chaperonin GroEL 2, found in Mycolicibacterium gilvum (strain PYR-GCK) (Mycobacterium gilvum (strain PYR-GCK)).